Here is a 71-residue protein sequence, read N- to C-terminus: Putative antitoxin VapB15 (71 aa).

It belongs to the UPF0330 family.

In terms of biological role, possibly the antitoxin component of a type II toxin-antitoxin (TA) system. Its cognate toxin is VapC15 (Potential). This is Putative antitoxin VapB15 (vapB15) from Archaeoglobus fulgidus (strain ATCC 49558 / DSM 4304 / JCM 9628 / NBRC 100126 / VC-16).